The chain runs to 394 residues: NAD(P)H-quinone oxidoreductase subunit H (394 aa).

This sequence belongs to the complex I 49 kDa subunit family. NDH-1 can be composed of about 15 different subunits; different subcomplexes with different compositions have been identified which probably have different functions. Post-translationally, the initiator methionine has been seen to be kept and removed.

Its subcellular location is the cellular thylakoid membrane. The enzyme catalyses a plastoquinone + NADH + (n+1) H(+)(in) = a plastoquinol + NAD(+) + n H(+)(out). The catalysed reaction is a plastoquinone + NADPH + (n+1) H(+)(in) = a plastoquinol + NADP(+) + n H(+)(out). Its function is as follows. NDH-1 shuttles electrons from an unknown electron donor, via FMN and iron-sulfur (Fe-S) centers, to quinones in the respiratory and/or the photosynthetic chain. The immediate electron acceptor for the enzyme in this species is believed to be plastoquinone. Couples the redox reaction to proton translocation, and thus conserves the redox energy in a proton gradient. Cyanobacterial NDH-1 also plays a role in inorganic carbon-concentration. The protein is NAD(P)H-quinone oxidoreductase subunit H (ndhH) of Synechocystis sp. (strain ATCC 27184 / PCC 6803 / Kazusa).